We begin with the raw amino-acid sequence, 209 residues long: Probable E3 ubiquitin-protein ligase NleG7 (209 aa).

The protein belongs to the NleG E3 ligase family. In terms of processing, two sizes of protein are detected in situ; only the smaller protein is secreted.

The protein localises to the secreted. It is found in the host cytoplasm. It catalyses the reaction S-ubiquitinyl-[E2 ubiquitin-conjugating enzyme]-L-cysteine + [acceptor protein]-L-lysine = [E2 ubiquitin-conjugating enzyme]-L-cysteine + N(6)-ubiquitinyl-[acceptor protein]-L-lysine.. In terms of biological role, effector proteins function to alter host cell physiology and promote bacterial survival in host tissues. This protein is probably an E3 ubiquitin-protein ligase that interferes with the host's ubiquitination pathway and targets host proteins for proteasomal degradation. Mice infected with a strain of bacteria deleted for this gene were colonized less quickly by bacteria. This Citrobacter rodentium protein is Probable E3 ubiquitin-protein ligase NleG7.